The sequence spans 605 residues: Sodium-independent sulfate anion transporter (605 aa).

The Extracellular portion of the chain corresponds to 1–50; it reads MPSSLKGLGQAWLSSSSMALSACCSVSAWQKRLPVLAWLPRYSLQWLKMD. A helical transmembrane segment spans residues 51–71; it reads FIAGLSVGLTVIPQALAYAEV. Position 72 (Ala-72) is a topological domain, cytoplasmic. Residues 73–93 form a helical membrane-spanning segment; it reads GLPPQYGLYSAFTGCFVYVFL. The Extracellular portion of the chain corresponds to 94-98; sequence GTSRD. A helical transmembrane segment spans residues 99–119; sequence VTLGPTAIMSLLVSFYTFHEP. Residues 120–122 are Cytoplasmic-facing; sequence AYA. A helical membrane pass occupies residues 123–143; sequence VLLTFLSGCIQLAMGLLHLGF. Topologically, residues 144-146 are extracellular; that stretch reads LLD. The chain crosses the membrane as a helical span at residues 147 to 167; it reads FISCPVIKGFTSAAAIIIGFG. Residues 168–196 lie on the Cytoplasmic side of the membrane; sequence QIKNLLGLHNIPRQFFLQVYHTFLSVGET. A helical transmembrane segment spans residues 197 to 217; sequence RLGDAILGLVCMVLLLVLKLM. Residues 218-249 are Extracellular-facing; it reads RDRIPPVHPEMPLCVRLSCGLVWTTATARNAL. Residues 250–270 form a helical membrane-spanning segment; sequence VVSFAALVAYSFEVTGYQPFI. At 271 to 303 the chain is on the cytoplasmic side; the sequence is LTGEIAKGLPPVRVPPFSVTMANGTVSFTRMVQ. A helical transmembrane segment spans residues 304 to 324; the sequence is DLGAGLAVVPLIGLLESIAVA. Topologically, residues 325 to 340 are extracellular; that stretch reads KAFASQNDYHVDANQE. A helical transmembrane segment spans residues 341 to 361; it reads LLAIGLTNMLGSFVSSYPITG. The Cytoplasmic segment spans residues 362–373; that stretch reads SFGRTAVNAQSG. A helical membrane pass occupies residues 374–394; it reads VCTPAGGLVTGALVLLSLDYL. The Extracellular portion of the chain corresponds to 395-397; sequence TSL. A helical transmembrane segment spans residues 398–418; it reads FYYIPKAALAAVIIMAVVPLF. The Cytoplasmic portion of the chain corresponds to 419-447; it reads DTKIFGMLWRVKRLDLLPLCATFLLCFWE. A helical membrane pass occupies residues 448–468; it reads VQYGILAGTLVSTLFLLHFVA. Topologically, residues 469 to 605 are extracellular; it reads RPKTQVSEGP…PEHKVTLLTA (137 aa). The STAS domain occupies 479-582; it reads VLILQLASGL…EKAEQYVRQE (104 aa).

Belongs to the SLC26A/SulP transporter (TC 2.A.53) family.

It localises to the cell membrane. Its subcellular location is the lysosome membrane. The protein localises to the apical cell membrane. The protein resides in the basolateral cell membrane. The enzyme catalyses hydrogencarbonate(in) + chloride(out) = hydrogencarbonate(out) + chloride(in). It carries out the reaction sulfate(in) + H(+)(in) = sulfate(out) + H(+)(out). The catalysed reaction is oxalate(in) + chloride(out) = oxalate(out) + chloride(in). Its function is as follows. Sodium-independent anion exchanger mediating bicarbonate, chloride, sulfate and oxalate transport. Exhibits sodium-independent sulfate anion transporter activity that may cooperate with SLC26A2 to mediate DIDS-sensitive sulfate uptake into high endothelial venules endothelial cells (HEVEC). In the kidney, mediates chloride-bicarbonate exchange, facilitating V-ATPase-mediated acid secretion. May function as a chloride channel, playing an important role in moderating chloride homeostasis and neuronal activity in the cerebellum. The polypeptide is Sodium-independent sulfate anion transporter (Slc26a11) (Cavia porcellus (Guinea pig)).